We begin with the raw amino-acid sequence, 403 residues long: Aminomethyltransferase, mitochondrial (403 aa).

The transit peptide at 1 to 28 (MHRIVSVVAPLGFRLQAQPLVQSRPLSS) directs the protein to the mitochondrion. Substrate is bound by residues E232 and R261. K368 carries the post-translational modification N6-succinyllysine. Substrate is bound at residue Y399.

It belongs to the GcvT family. In terms of assembly, the glycine cleavage system is composed of four proteins: P, T, L and H.

It is found in the mitochondrion. The catalysed reaction is N(6)-[(R)-S(8)-aminomethyldihydrolipoyl]-L-lysyl-[protein] + (6S)-5,6,7,8-tetrahydrofolate = N(6)-[(R)-dihydrolipoyl]-L-lysyl-[protein] + (6R)-5,10-methylene-5,6,7,8-tetrahydrofolate + NH4(+). Functionally, the glycine cleavage system catalyzes the degradation of glycine. The chain is Aminomethyltransferase, mitochondrial from Mus musculus (Mouse).